The chain runs to 401 residues: Golgi membrane protein 1 (401 aa).

Met1 bears the N-acetylmethionine mark. Topologically, residues 1–12 (MMGLGNGRRSMK) are cytoplasmic. Residues 13–35 (SPPLVLAALVACIIVLGFNYWIA) form a helical; Signal-anchor for type II membrane protein membrane-spanning segment. Residues 36 to 401 (SSRSVDLQTR…DQREKRNHTL (366 aa)) lie on the Lumenal side of the membrane. Residues 40-205 (VDLQTRIMEL…QRQQLQALSE (166 aa)) adopt a coiled-coil conformation. Residue Asn109 is glycosylated (N-linked (GlcNAc...) (complex) asparagine). N-linked (GlcNAc...) asparagine glycosylation is present at Asn144. The segment at 178–401 (TKKGNEAVAS…DQREKRNHTL (224 aa)) is disordered. Ser187 bears the Phosphoserine mark. Residues 228–238 (LGNSKSQTPAP) show a composition bias toward polar residues. Basic and acidic residues-rich tracts occupy residues 244–255 (LDSKRQVEKEET) and 264–285 (EPQR…DRPV). Over residues 286–295 (GGRGFGGAGE) the composition is skewed to gly residues. The span at 298 to 312 (QTPQVQAALSVSQEN) shows a compositional bias: polar residues. Ser309 carries the phosphoserine; by FAM20C modification. Residues 350-360 (DYNMDENEAES) show a composition bias toward acidic residues. Residues 381–395 (EDQKRDTINLLDQRE) are compositionally biased toward basic and acidic residues. N-linked (GlcNAc...) asparagine glycosylation occurs at Asn398.

It belongs to the GOLM family. In terms of assembly, interacts with DYM. In terms of processing, glycosylated. Post-translationally, phosphorylation sites are present in the extracellular medium. As to expression, widely expressed. Highly expressed in colon, prostate, trachea and stomach. Expressed at lower level in testis, muscle, lymphoid tissues, white blood cells and spleen. Predominantly expressed by cells of the epithelial lineage. Expressed at low level in normal liver. Expression significantly increases in virus (HBV, HCV) infected liver. Expression does not increase in liver disease due to non-viral causes (alcohol-induced liver disease, autoimmune hepatitis). Increased expression in hepatocytes appears to be a general feature of advanced liver disease. In liver tissue from patients with adult giant-cell hepatitis (GCH), it is strongly expressed in hepatocytes-derived syncytial giant cells. Constitutively expressed by biliary epithelial cells but not by hepatocytes.

The protein resides in the golgi apparatus. It is found in the cis-Golgi network membrane. Its function is as follows. Unknown. Cellular response protein to viral infection. The chain is Golgi membrane protein 1 (GOLM1) from Homo sapiens (Human).